Here is a 129-residue protein sequence, read N- to C-terminus: Ribosome-binding factor A (129 aa).

This sequence belongs to the RbfA family. Monomer. Binds 30S ribosomal subunits, but not 50S ribosomal subunits or 70S ribosomes.

The protein localises to the cytoplasm. One of several proteins that assist in the late maturation steps of the functional core of the 30S ribosomal subunit. Associates with free 30S ribosomal subunits (but not with 30S subunits that are part of 70S ribosomes or polysomes). Required for efficient processing of 16S rRNA. May interact with the 5'-terminal helix region of 16S rRNA. This chain is Ribosome-binding factor A, found in Pseudomonas aeruginosa (strain UCBPP-PA14).